The sequence spans 644 residues: Leucine-rich repeat protein soc-2 homolog (644 aa).

Residues 1–19 show a composition bias toward low complexity; sequence MNLCSSGATASTTSLSSTG. Disordered stretches follow at residues 1 to 60 and 82 to 150; these read MNLC…APTL and NSPA…IQAD. Composition is skewed to gly residues over residues 26–50 and 87–96; these read GVPG…GGKA and GAGGASGFTG. The segment covering 99–117 has biased composition (polar residues); sequence QQPTGSNGHSHLHNENNAN. 20 LRR repeats span residues 164-185, 187-208, 210-231, 233-254, 256-277, 279-300, 302-323, 325-346, 348-370, 371-392, 395-416, 419-440, 443-464, 466-487, 489-510, 512-533, 535-556, 558-579, 581-603, and 605-626; these read GIKR…VKEC, HLTE…IGCL, SLRN…LQNC, QLKV…IYRL, SLTT…LRQL, NLTM…IGAL, NLTT…IGNC, NLSA…IGNL, SLVR…KNCK, SMDE…MLAS, GLTT…GPAQ, NVYS…IFSR, GLTK…IGTW, NMVE…IMNL, NLEI…IGNL, RLRI…IGLL, ELQR…IGHL, NLTH…IGSL, SLEN…LALC, and NLKY…IQAG.

The protein belongs to the SHOC2 family.

In terms of biological role, acts as a Ras effector and participates in MAPK pathway activation. Probably acts as a regulatory subunit of protein phosphatase that specifically dephosphorylates Raf kinase and stimulate Raf activity at specialized signaling complexes upon Ras activation. This is Leucine-rich repeat protein soc-2 homolog (Sur-8) from Drosophila erecta (Fruit fly).